Here is a 180-residue protein sequence, read N- to C-terminus: Alkyl hydroperoxide reductase AhpD (180 aa).

C131 (proton donor) is an active-site residue. Cysteines 131 and 134 form a disulfide. C134 acts as the Cysteine sulfenic acid (-SOH) intermediate in catalysis.

The protein belongs to the AhpD family.

It carries out the reaction N(6)-[(R)-dihydrolipoyl]-L-lysyl-[lipoyl-carrier protein] + a hydroperoxide = N(6)-[(R)-lipoyl]-L-lysyl-[lipoyl-carrier protein] + an alcohol + H2O. In terms of biological role, antioxidant protein with alkyl hydroperoxidase activity. Required for the reduction of the AhpC active site cysteine residues and for the regeneration of the AhpC enzyme activity. In Beijerinckia indica subsp. indica (strain ATCC 9039 / DSM 1715 / NCIMB 8712), this protein is Alkyl hydroperoxide reductase AhpD.